The chain runs to 846 residues: Rho GTPase-activating protein 17 (846 aa).

The 233-residue stretch at 14–246 folds into the BAR domain; the sequence is QTVGRAEKTE…MRAHQDKWAE (233 aa). The Rho-GAP domain occupies 252–442; sequence TPLEEHLKRS…PIIQHADWFF (191 aa). Residues 459-475 show a composition bias toward polar residues; that stretch reads TPNSNHSSHTGNDSDSG. The segment at 459-482 is disordered; it reads TPNSNHSSHTGNDSDSGTLERKRP. Phosphoserine is present on residues S484 and S575. A disordered region spans residues 519 to 807; the sequence is IAPAFQPPLP…ASRIVTDTNS (289 aa). A compositionally biased stretch (polar residues) spans 592-619; sequence RNSNQMTTVPNQAQTGGNSHQLSVSTPH. A compositionally biased stretch (pro residues) spans 637–650; the sequence is APAPPKPGNLPPGH. The segment covering 653-690 has biased composition (low complexity); sequence GQSSPGTGTSPKPSARSPSPPQQQQQQQQQQQQQQQQQ. A phosphoserine mark is found at S698 and S700. Pro residues-rich tracts occupy residues 704 to 717 and 726 to 741; these read IQAP…PPTQ and EPGP…PSTP. T730, T734, and T736 each carry phosphothreonine. Positions 730–743 match the SH3-binding motif; that stretch reads TPPQTPTPPSTPPL. Residue S739 is modified to Phosphoserine. T740 carries the phosphothreonine modification. A compositionally biased stretch (polar residues) spans 746 to 757; sequence QNPSQSETTQLH. A compositionally biased stretch (pro residues) spans 772-782; the sequence is RPSVPPPPHPP. Polar residues predominate over residues 791–807; the sequence is LTSSVPTASRIVTDTNS.

Component of a complex whose core is composed of ARHGAP17, AMOT, PALS1, PATJ and PARD3/PAR3. Interacts with NHERF1, FNBP1, TRIP10, CAPZA (CAPZA1, CAPZA2 or CAPZA3), CAPZB, CD2AP and SH3KBP1/CIN85.

It localises to the membrane. Its subcellular location is the cytoplasm. The protein localises to the cell junction. It is found in the tight junction. Its function is as follows. Rho GTPase-activating protein involved in the maintenance of tight junction by regulating the activity of CDC42, thereby playing a central role in apical polarity of epithelial cells. Specifically acts as a GTPase activator for the CDC42 GTPase by converting it to an inactive GDP-bound state. The complex formed with AMOT acts by regulating the uptake of polarity proteins at tight junctions, possibly by deciding whether tight junction transmembrane proteins are recycled back to the plasma membrane or sent elsewhere. Participates in the Ca(2+)-dependent regulation of exocytosis, possibly by catalyzing GTPase activity of Rho family proteins and by inducing the reorganization of the cortical actin filaments. Acts as a GTPase activator in vitro for RAC1. In Mus musculus (Mouse), this protein is Rho GTPase-activating protein 17 (Arhgap17).